Here is a 126-residue protein sequence, read N- to C-terminus: Phosphoribosyl-AMP cyclohydrolase (126 aa).

Position 76 (D76) interacts with Mg(2+). C77 serves as a coordination point for Zn(2+). Positions 78 and 80 each coordinate Mg(2+). Zn(2+)-binding residues include C94 and C101.

The protein belongs to the PRA-CH family. Homodimer. It depends on Mg(2+) as a cofactor. Zn(2+) serves as cofactor.

It localises to the cytoplasm. It catalyses the reaction 1-(5-phospho-beta-D-ribosyl)-5'-AMP + H2O = 1-(5-phospho-beta-D-ribosyl)-5-[(5-phospho-beta-D-ribosylamino)methylideneamino]imidazole-4-carboxamide. The protein operates within amino-acid biosynthesis; L-histidine biosynthesis; L-histidine from 5-phospho-alpha-D-ribose 1-diphosphate: step 3/9. Catalyzes the hydrolysis of the adenine ring of phosphoribosyl-AMP. This is Phosphoribosyl-AMP cyclohydrolase from Vesicomyosocius okutanii subsp. Calyptogena okutanii (strain HA).